Reading from the N-terminus, the 436-residue chain is Serine hydroxymethyltransferase (436 aa).

Residues Leu133 and 137 to 139 (GHI) each bind (6S)-5,6,7,8-tetrahydrofolate. Residue Lys242 is modified to N6-(pyridoxal phosphate)lysine.

The protein belongs to the SHMT family. Homodimer. It depends on pyridoxal 5'-phosphate as a cofactor.

It is found in the cytoplasm. It carries out the reaction (6R)-5,10-methylene-5,6,7,8-tetrahydrofolate + glycine + H2O = (6S)-5,6,7,8-tetrahydrofolate + L-serine. It participates in one-carbon metabolism; tetrahydrofolate interconversion. The protein operates within amino-acid biosynthesis; glycine biosynthesis; glycine from L-serine: step 1/1. In terms of biological role, catalyzes the reversible interconversion of serine and glycine with tetrahydrofolate (THF) serving as the one-carbon carrier. This reaction serves as the major source of one-carbon groups required for the biosynthesis of purines, thymidylate, methionine, and other important biomolecules. Also exhibits THF-independent aldolase activity toward beta-hydroxyamino acids, producing glycine and aldehydes, via a retro-aldol mechanism. The sequence is that of Serine hydroxymethyltransferase from Pelagibacter ubique (strain HTCC1062).